The following is a 285-amino-acid chain: Dihydropteroate synthase (285 aa).

A Pterin-binding domain is found at 18-276 (PKIMGIVNLT…DVKATADALK (259 aa)). Asparagine 25 lines the Mg(2+) pocket. (7,8-dihydropterin-6-yl)methyl diphosphate-binding positions include threonine 66, aspartate 99, asparagine 119, aspartate 190, lysine 229, and 264-266 (RVH).

The protein belongs to the DHPS family. Homodimer. The cofactor is Mg(2+).

The enzyme catalyses (7,8-dihydropterin-6-yl)methyl diphosphate + 4-aminobenzoate = 7,8-dihydropteroate + diphosphate. The protein operates within cofactor biosynthesis; tetrahydrofolate biosynthesis; 7,8-dihydrofolate from 2-amino-4-hydroxy-6-hydroxymethyl-7,8-dihydropteridine diphosphate and 4-aminobenzoate: step 1/2. Its function is as follows. Catalyzes the condensation of para-aminobenzoate (pABA) with 6-hydroxymethyl-7,8-dihydropterin diphosphate (DHPt-PP) to form 7,8-dihydropteroate (H2Pte), the immediate precursor of folate derivatives. The protein is Dihydropteroate synthase (folP) of Neisseria meningitidis serogroup B (strain ATCC BAA-335 / MC58).